We begin with the raw amino-acid sequence, 104 residues long: uncharacterized protein (104 aa).

Residues 77 to 98 form a helical membrane-spanning segment; sequence IAAVRANIIICACFFYLFCYCS.

The protein localises to the membrane. This is an uncharacterized protein from Saccharomyces cerevisiae (strain ATCC 204508 / S288c) (Baker's yeast).